A 69-amino-acid chain; its full sequence is DNA-directed RNA polymerase subunit epsilon (69 aa).

This sequence belongs to the RNA polymerase subunit epsilon family. RNAP is composed of a core of 2 alpha, a beta and a beta' subunit. The core is associated with a delta subunit, and at least one of epsilon or omega. When a sigma factor is associated with the core the holoenzyme is formed, which can initiate transcription.

It carries out the reaction RNA(n) + a ribonucleoside 5'-triphosphate = RNA(n+1) + diphosphate. A non-essential component of RNA polymerase (RNAP). This chain is DNA-directed RNA polymerase subunit epsilon, found in Listeria monocytogenes serotype 4b (strain CLIP80459).